A 1269-amino-acid polypeptide reads, in one-letter code: DNA-directed RNA polymerase subunit beta (1269 aa).

The protein belongs to the RNA polymerase beta chain family. As to quaternary structure, the RNAP catalytic core consists of 2 alpha, 1 beta, 1 beta' and 1 omega subunit. When a sigma factor is associated with the core the holoenzyme is formed, which can initiate transcription.

The catalysed reaction is RNA(n) + a ribonucleoside 5'-triphosphate = RNA(n+1) + diphosphate. Its function is as follows. DNA-dependent RNA polymerase catalyzes the transcription of DNA into RNA using the four ribonucleoside triphosphates as substrates. This is DNA-directed RNA polymerase subunit beta from Porphyromonas gingivalis (strain ATCC 33277 / DSM 20709 / CIP 103683 / JCM 12257 / NCTC 11834 / 2561).